The primary structure comprises 559 residues: Dihydroxy-acid dehydratase 2 (559 aa).

Position 53 (C53) interacts with [2Fe-2S] cluster. Residue D85 participates in Mg(2+) binding. C126 is a binding site for [2Fe-2S] cluster. D127 and K128 together coordinate Mg(2+). K128 carries the post-translational modification N6-carboxylysine. C195 lines the [2Fe-2S] cluster pocket. A Mg(2+)-binding site is contributed by E446. S472 serves as the catalytic Proton acceptor.

It belongs to the IlvD/Edd family. Homodimer. Requires [2Fe-2S] cluster as cofactor. Mg(2+) serves as cofactor.

The enzyme catalyses (2R)-2,3-dihydroxy-3-methylbutanoate = 3-methyl-2-oxobutanoate + H2O. It catalyses the reaction (2R,3R)-2,3-dihydroxy-3-methylpentanoate = (S)-3-methyl-2-oxopentanoate + H2O. Its pathway is amino-acid biosynthesis; L-isoleucine biosynthesis; L-isoleucine from 2-oxobutanoate: step 3/4. It functions in the pathway amino-acid biosynthesis; L-valine biosynthesis; L-valine from pyruvate: step 3/4. Functions in the biosynthesis of branched-chain amino acids. Catalyzes the dehydration of (2R,3R)-2,3-dihydroxy-3-methylpentanoate (2,3-dihydroxy-3-methylvalerate) into 2-oxo-3-methylpentanoate (2-oxo-3-methylvalerate) and of (2R)-2,3-dihydroxy-3-methylbutanoate (2,3-dihydroxyisovalerate) into 2-oxo-3-methylbutanoate (2-oxoisovalerate), the penultimate precursor to L-isoleucine and L-valine, respectively. This is Dihydroxy-acid dehydratase 2 from Pseudoalteromonas translucida (strain TAC 125).